The chain runs to 132 residues: Evasin P985 (132 aa).

The signal sequence occupies residues 1 to 24 (MHSTIAYVSLLPLALFVAMHGAST). N-linked (GlcNAc...) asparagine glycans are attached at residues asparagine 45, asparagine 69, asparagine 74, asparagine 103, asparagine 111, and asparagine 117. 4 disulfide bridges follow: cysteine 48–cysteine 70, cysteine 66–cysteine 109, cysteine 83–cysteine 114, and cysteine 104–cysteine 123.

Its subcellular location is the secreted. Its function is as follows. Salivary chemokine-binding protein which binds to host chemokine CCL5. The polypeptide is Evasin P985 (Amblyomma parvum (South American tick)).